The following is a 418-amino-acid chain: Putative ion-transport protein YfeO (418 aa).

Transmembrane regions (helical) follow at residues 10–30, 54–74, 99–119, 120–140, 149–169, 186–206, 223–243, 258–278, 300–320, 322–342, 343–363, and 371–391; these read LLLS…LIVV, DSPL…GLVI, ALPG…SLGP, EHPI…RLLP, ILAS…AALI, LFAP…FFHP, ILSG…AVWC, VLVL…GGPV, DYFL…ASGF, GGRI…LHEH, VPAV…VLVV, and LFMA…CIVM.

This sequence belongs to the chloride channel (TC 2.A.49) family.

The protein localises to the cell membrane. The sequence is that of Putative ion-transport protein YfeO from Shigella boydii serotype 4 (strain Sb227).